We begin with the raw amino-acid sequence, 144 residues long: UPF0102 protein BPSL3274 (144 aa).

The tract at residues methionine 1–serine 28 is disordered. Basic and acidic residues predominate over residues alanine 16–serine 28.

The protein belongs to the UPF0102 family.

In Burkholderia pseudomallei (strain K96243), this protein is UPF0102 protein BPSL3274.